We begin with the raw amino-acid sequence, 342 residues long: Phosphoribosylformylglycinamidine cyclo-ligase (342 aa).

The protein belongs to the AIR synthase family.

It localises to the cytoplasm. It catalyses the reaction 2-formamido-N(1)-(5-O-phospho-beta-D-ribosyl)acetamidine + ATP = 5-amino-1-(5-phospho-beta-D-ribosyl)imidazole + ADP + phosphate + H(+). The protein operates within purine metabolism; IMP biosynthesis via de novo pathway; 5-amino-1-(5-phospho-D-ribosyl)imidazole from N(2)-formyl-N(1)-(5-phospho-D-ribosyl)glycinamide: step 2/2. The sequence is that of Phosphoribosylformylglycinamidine cyclo-ligase from Staphylococcus aureus (strain USA300).